We begin with the raw amino-acid sequence, 78 residues long: Defensin-like protein 141 (78 aa).

Residues 1-24 form the signal peptide; that stretch reads MTKSIISAFFIILILGMMVNEIEG. 4 disulfide bridges follow: Cys-31–Cys-76, Cys-40–Cys-59, Cys-45–Cys-70, and Cys-49–Cys-72.

This sequence belongs to the DEFL family.

Its subcellular location is the secreted. The chain is Defensin-like protein 141 (LCR3) from Arabidopsis thaliana (Mouse-ear cress).